A 2799-amino-acid polypeptide reads, in one-letter code: E3 ubiquitin-protein ligase UBR5 (2799 aa).

Thr2 carries the post-translational modification N-acetylthreonine. Residues 77–88 show a composition bias toward basic and acidic residues; that stretch reads DRLELGKPDNND. A disordered region spans residues 77–175; sequence DRLELGKPDN…DRGSGLLGSQ (99 aa). Polar residues predominate over residues 89-110; it reads GSKLNSNSGAGRTSRPGRTSDS. Position 110 is a phosphoserine (Ser110). The span at 135 to 144 shows a compositional bias: gly residues; the sequence is GVGGSGGGSS. The 43-residue stretch at 184–226 folds into the UBA domain; the sequence is VIPEELISQAQVVLQGKSRSVIIRELQRTNLDVNLAVNNLLSR. Position 327 is a phosphoserine (Ser327). Positions 328 to 347 are enriched in basic and acidic residues; sequence FDNERGSTSKEGEPNLDKKN. Positions 328–352 are disordered; the sequence is FDNERGSTSKEGEPNLDKKNTPVQS. Ser352 and Ser578 each carry phosphoserine. Residues 579–648 are disordered; it reads PESLKNMEKA…APKEEEKVNE (70 aa). A compositionally biased stretch (basic and acidic residues) spans 583-604; that stretch reads KNMEKASKTTEAKPESKQEPVK. Ser612 is modified (phosphoserine). Low complexity predominate over residues 614 to 628; sequence ASTCSDASSIASSAS. Residue Thr637 is modified to Phosphothreonine. 3 positions are modified to phosphoserine: Ser808, Ser928, and Ser1018. Disordered stretches follow at residues 999 to 1031 and 1052 to 1075; these read AGLGRHEAGASSSDHQDPVSPPIAPPSWVPDPP and TAATGTGQGPSTSTIPGPSTEPSV. A compositionally biased stretch (pro residues) spans 1017–1031; it reads VSPPIAPPSWVPDPP. Over residues 1052-1073 the composition is skewed to polar residues; it reads TAATGTGQGPSTSTIPGPSTEP. 2 positions are modified to phosphothreonine: Thr1115 and Thr1135. The UBR-type zinc finger occupies 1177-1245; the sequence is DTCSFTWTGA…EKCKCKTLIA (69 aa). Cys1179, Cys1196, Cys1199, Cys1208, Cys1211, Cys1215, His1216, and His1219 together coordinate Zn(2+). Ser1227 bears the Phosphoserine mark. The Zn(2+) site is built by Cys1232, Cys1234, and Cys1240. The disordered stretch occupies residues 1299–1318; sequence REDRNRKTASPEDSDMPDHD. Phosphoserine occurs at positions 1308, 1355, 1375, and 1481. The segment at 1515-1740 is disordered; the sequence is SVEPLPPRPS…PSSTSTPAAS (226 aa). The segment covering 1524–1537 has biased composition (low complexity); the sequence is SSDQSSSSSQSQSS. Residues 1538-1553 show a composition bias toward polar residues; that stretch reads YIIRNPQQRRISQSQP. A Phosphoserine modification is found at Ser1549. 2 stretches are compositionally biased toward acidic residues: residues 1559 to 1574 and 1605 to 1614; these read EEQDDIVSADVEEVEV and HDEDGSDMEL. Polar residues predominate over residues 1629–1638; it reads NHSNQDNASG. Composition is skewed to low complexity over residues 1641 to 1657, 1668 to 1681, and 1726 to 1740; these read SVVTAATAGSEAGASSV, SNDSSDSDSSSSQS, and AASTAPSSTSTPAAS. Phosphothreonine is present on Thr1736. At Ser1741 the chain carries Phosphoserine. Phosphotyrosine is present on Tyr1746. Ser1780 is modified (phosphoserine). The disordered stretch occupies residues 1859–1890; that stretch reads LASAGDPGHPNHPLHASQNSARRERMTAREEA. Residues 1879 to 1890 show a composition bias toward basic and acidic residues; that stretch reads ARRERMTAREEA. Position 1969 is a phosphothreonine (Thr1969). A disordered region spans residues 1984 to 2021; sequence GIDNEDSEHENDDDTNQSATLNDKDDDSLPAETGQNHP. A compositionally biased stretch (acidic residues) spans 1985–1998; that stretch reads IDNEDSEHENDDDT. A phosphoserine mark is found at Ser1990, Ser2026, and Ser2028. Thr2030 carries the phosphothreonine modification. A Phosphoserine modification is found at Ser2076. Positions 2117-2142 are disordered; that stretch reads RQKKEGEEQPVLPEETESSKPGPSAH. The residue at position 2213 (Thr2213) is a Phosphothreonine. A phosphoserine mark is found at Ser2241 and Ser2289. Positions 2323–2392 are disordered; that stretch reads HTSLMQRLRN…PSDDPEPLPA (70 aa). 2 stretches are compositionally biased toward basic and acidic residues: residues 2332–2348 and 2356–2368; these read NRGERDREREREREMRR and SRRDRDRDFRRQL. Residues 2377 to 2454 form the PABC domain; sequence PASEGNPSDD…AMELIIAHGR (78 aa). The HECT domain occupies 2462 to 2799; the sequence is LDLGLVDSSE…AIKTKNFGFV (338 aa). Phosphoserine occurs at positions 2469, 2484, and 2486. A disordered region spans residues 2473 to 2493; that stretch reads VQQENRKRHGSSRSVVDMDLD. Residue Cys2768 is the Glycyl thioester intermediate of the active site.

It belongs to the UBR5 family. As to quaternary structure, homotetramer; composed of a dimer of dimers. Associates with CDK9 and TFIIS/TCEA1 and forms a transcription regulatory complex made of CDK9, RNAP II, UBR5 and TFIIS/TCEA1 that can stimulate target gene transcription (e.g. gamma fibrinogen/FGG) by recruiting their promoters. Associates with the E3 ligase complex containing DYRK2, EDD/UBR5, DDB1 and DCAF1 proteins (EDVP complex). Binds TOPBP1. Interacts with PIH1D1. Interacts with CIB1. In terms of assembly, (Microbial infection) Interacts with human T-cell leukemia virus 1/HTLV-1 protein HBZ; this interaction modulates HBZ stability. Widely expressed. Most abundant in testis and expressed at high levels in brain, pituitary and kidney.

It is found in the nucleus. The protein localises to the cytoplasm. It carries out the reaction S-ubiquitinyl-[E2 ubiquitin-conjugating enzyme]-L-cysteine + [acceptor protein]-L-lysine = [E2 ubiquitin-conjugating enzyme]-L-cysteine + N(6)-ubiquitinyl-[acceptor protein]-L-lysine.. The protein operates within protein modification; protein ubiquitination. Functionally, E3 ubiquitin-protein ligase involved in different protein quality control pathways in the cytoplasm and nucleus. Mainly acts as a ubiquitin chain elongator that extends pre-ubiquitinated substrates. Component of the N-end rule pathway: ubiquitinates proteins bearing specific N-terminal residues that are destabilizing according to the N-end rule, leading to their degradation. Recognizes type-1 N-degrons, containing positively charged amino acids (Arg, Lys and His). Together with UBR4, part of a cytoplasm protein quality control pathway that prevents protein aggregation by catalyzing assembly of heterotypic 'Lys-11'-/'Lys-48'-linked branched ubiquitin chains on aggregated proteins, leading to substrate recognition by the segregase p97/VCP and degradation by the proteasome: UBR5 is probably branching multiple 'Lys-48'-linked chains of substrates initially modified with mixed conjugates by UBR4. Together with ITCH, catalyzes 'Lys-48'-/'Lys-63'-branched ubiquitination of TXNIP, leading to its degradation: UBR5 mediates branching of 'Lys-48'-linked chains of substrates initially modified with 'Lys-63'-linked conjugates by ITCH. Catalytic component of a nuclear protein quality control pathway that mediates ubiquitination and degradation of unpaired transcription factors (i.e. transcription factors that are not assembled into functional multiprotein complexes): specifically recognizes and binds degrons that are not accessible when transcription regulators are associated with their coactivators. Ubiquitinates various unpaired transcription regulator (MYC, SUPT4H1, SUPT5H, CDC20 and MCRS1), as well as ligand-bound nuclear receptors (ESR1, NR1H3, NR3C1, PGR, RARA, RXRA AND VDR) that are not associated with their nuclear receptor coactivators (NCOAs). Involved in maturation and/or transcriptional regulation of mRNA by mediating polyubiquitination and activation of CDK9. Also acts as a regulator of DNA damage response by acting as a suppressor of RNF168, an E3 ubiquitin-protein ligase that promotes accumulation of 'Lys-63'-linked histone H2A and H2AX at DNA damage sites, thereby acting as a guard against excessive spreading of ubiquitinated chromatin at damaged chromosomes. Regulates DNA topoisomerase II binding protein (TopBP1) in the DNA damage response. Ubiquitinates acetylated PCK1. Acts as a positive regulator of the canonical Wnt signaling pathway by mediating (1) ubiquitination and stabilization of CTNNB1, and (2) 'Lys-48'-linked ubiquitination and degradation of TLE3. Promotes disassembly of the mitotic checkpoint complex (MCC) from the APC/C complex by catalyzing ubiquitination of BUB1B, BUB3 and CDC20. Plays an essential role in extraembryonic development. Required for the maintenance of skeletal tissue homeostasis by acting as an inhibitor of hedgehog (HH) signaling. The chain is E3 ubiquitin-protein ligase UBR5 (UBR5) from Homo sapiens (Human).